The chain runs to 352 residues: Rhodopsin (352 aa).

Topologically, residues 1 to 36 (MNGTEGPYFYVPMSNATGVVRSPYEYPQYYLAPPWA) are extracellular. Residues asparagine 2 and asparagine 15 are each glycosylated (N-linked (GlcNAc...) asparagine). A helical transmembrane segment spans residues 37–61 (YACLAAYMFFLILVGFPVNFLTLYV). The Cytoplasmic portion of the chain corresponds to 62 to 73 (TIEHKKLRTPLN). The chain crosses the membrane as a helical span at residues 74-96 (YILLNLAVADLFMVFGGFTTTMY). Residues 97–110 (TSLNGYFVFGRLGC) are Extracellular-facing. Residues cysteine 110 and cysteine 187 are joined by a disulfide bond. A helical transmembrane segment spans residues 111 to 133 (NLEGFFATFGGINSLWCLVVLSI). Residues 134-136 (ERW) carry the 'Ionic lock' involved in activated form stabilization motif. At 134 to 152 (ERWVVVCKPMSNFRFGENH) the chain is on the cytoplasmic side. A helical membrane pass occupies residues 153-173 (AIMGVAFTWFMALACTVPPLV). Over 174 to 202 (GWSRYIPEGMQCSCGIDYYTRAEGFNNES) the chain is Extracellular. The chain crosses the membrane as a helical span at residues 203-224 (FVIYMFVVHFLTPLFVITFCYG). At 225–252 (RLVCTVKEAAAQQQESETTQRAEREVTR) the chain is on the cytoplasmic side. The helical transmembrane segment at 253–274 (MVILMFIAYLVCWLPYASVSWW) threads the bilayer. The Extracellular segment spans residues 275 to 286 (IFTNQGSEFGPI). A helical membrane pass occupies residues 287 to 308 (FMTVPAFFAKSSSIYNPVIYIC). Lysine 296 bears the N6-(retinylidene)lysine mark. Topologically, residues 309–352 (LNKQFRHCMITTLCCGKNPFEEEEGASTTASKTEASSVSSVSPA) are cytoplasmic. Residues cysteine 322 and cysteine 323 are each lipidated (S-palmitoyl cysteine). Residues 331–352 (EEGASTTASKTEASSVSSVSPA) form a disordered region. A compositionally biased stretch (low complexity) spans 334-352 (ASTTASKTEASSVSSVSPA).

It belongs to the G-protein coupled receptor 1 family. Opsin subfamily. In terms of processing, phosphorylated on some or all of the serine and threonine residues present in the C-terminal region. Contains one covalently linked retinal chromophore.

The protein localises to the membrane. It is found in the cell projection. The protein resides in the cilium. Its subcellular location is the photoreceptor outer segment. Functionally, photoreceptor required for image-forming vision at low light intensity. While most salt water fish species use retinal as chromophore, most freshwater fish use 3-dehydroretinal, or a mixture of retinal and 3-dehydroretinal. Light-induced isomerization of 11-cis to all-trans retinal triggers a conformational change that activates signaling via G-proteins. Subsequent receptor phosphorylation mediates displacement of the bound G-protein alpha subunit by arrestin and terminates signaling. The sequence is that of Rhodopsin (rho) from Psalidodon fasciatus (Banded astyanax).